Here is a 246-residue protein sequence, read N- to C-terminus: MAAVDIRDNLLGISWVDSSWIPILNSGSVLDYFSERSNPFYDRTCNNEVVKMQRLTLEHLNQMVGVEYILLHAQEPILFIIRKQQRQSPTQVIPLADYYIIAGVIYQAPDLGSVINSRVLTAVHGIQSAFDEAMSYCRYHPSKGYWWHFKDHEEQDKVKPKVKRKEEPSSIFQRQRVDALLLDLRQKFPPKFVQQKSGEKPVPVDQTKKEAEPLPETVKSEEKETAKNVQQTVGTKGPPEKRMRLQ.

Residues 191 to 246 (KFVQQKSGEKPVPVDQTKKEAEPLPETVKSEEKETAKNVQQTVGTKGPPEKRMRLQ) form a disordered region. Over residues 206 to 226 (QTKKEAEPLPETVKSEEKETA) the composition is skewed to basic and acidic residues. Lys-208 participates in a covalent cross-link: Glycyl lysine isopeptide (Lys-Gly) (interchain with G-Cter in SUMO2). An N6-acetyllysine mark is found at Lys-236 and Lys-241.

This sequence belongs to the Mediator complex subunit 6 family. In terms of assembly, component of the Mediator complex, which is composed of MED1, MED4, MED6, MED7, MED8, MED9, MED10, MED11, MED12, MED13, MED13L, MED14, MED15, MED16, MED17, MED18, MED19, MED20, MED21, MED22, MED23, MED24, MED25, MED26, MED27, MED29, MED30, MED31, CCNC, CDK8 and CDC2L6/CDK11. The MED12, MED13, CCNC and CDK8 subunits form a distinct module termed the CDK8 module. Mediator containing the CDK8 module is less active than Mediator lacking this module in supporting transcriptional activation. Individual preparations of the Mediator complex lacking one or more distinct subunits have been variously termed ARC, CRSP, DRIP, PC2, SMCC and TRAP. Interacts with CTNNB1 and GLI3.

The protein localises to the nucleus. Its function is as follows. Component of the Mediator complex, a coactivator involved in the regulated transcription of nearly all RNA polymerase II-dependent genes. Mediator functions as a bridge to convey information from gene-specific regulatory proteins to the basal RNA polymerase II transcription machinery. Mediator is recruited to promoters by direct interactions with regulatory proteins and serves as a scaffold for the assembly of a functional preinitiation complex with RNA polymerase II and the general transcription factors. This Bos taurus (Bovine) protein is Mediator of RNA polymerase II transcription subunit 6 (MED6).